A 423-amino-acid chain; its full sequence is MTITQPDLSVFETVESEVRSYCRGWPTVFDRAVGSRMYDEDGHEYLDFFAGAGSLNYGHNNAVLKRALIDYLERDGVTHGLDMSTTAKRRFLETFQNTILRPRDLPYKVMFPGPTGTNAVESALKLARKVKGRESIVSFTNAFHGMSLGSLAVTGNAFKRAGAGIPLVHGTPMPFDNYFDGTVEDFIWFERLLEDQGSGLNKPAAVIVETVQGEGGINVARAEWLRALADLCERQDMLLIVDDIQMGCGRTGAFFSFEEAGITPDIVTVSKSISGYGMPMALTLFKPELDVWEPGEHNGTFRGNNPAFVTATATLEAYWADGSAMEKQTRKRGEQVEQHMIAITEENLADVKEYRGRGLVWGLEFHDKDRAGRVAKRAFELGLLIETSGPESEVVKLLPALTITPDELDEGMKTLARAVRETA.

K271 bears the N6-(pyridoxal phosphate)lysine mark.

Belongs to the class-III pyridoxal-phosphate-dependent aminotransferase family. The cofactor is pyridoxal 5'-phosphate.

It carries out the reaction L-2,4-diaminobutanoate + 2-oxoglutarate = L-aspartate 4-semialdehyde + L-glutamate. Its pathway is amine and polyamine biosynthesis; ectoine biosynthesis; L-ectoine from L-aspartate 4-semialdehyde: step 1/3. In terms of biological role, catalyzes reversively the conversion of L-aspartate beta-semialdehyde (ASA) to L-2,4-diaminobutyrate (DABA) by transamination with L-glutamate. The polypeptide is Diaminobutyrate--2-oxoglutarate transaminase (ectB) (Streptomyces coelicolor (strain ATCC BAA-471 / A3(2) / M145)).